The primary structure comprises 1050 residues: Ankyrin repeat domain-containing protein 27 (1050 aa).

The interval 1–372 (MALYDEDLLK…RQGSLSAKPP (372 aa)) is sufficient for GEF activity towards RAB21. The VPS9 domain occupies 233-371 (ASEDAAFNKI…IRQGSLSAKP (139 aa)). 6 ANK repeats span residues 396–426 (SPTD…DKDA), 462–491 (RGHT…VVNA), 495–524 (HGAT…SAEV), 528–560 (NGNT…RLDI), 564–593 (KGDT…SPEI), and 597–627 (LKET…RQKS). Positions 396–460 (SPTDCLFKHI…PSVVTPFSRD (65 aa)) are sufficient for interaction with VPS29. The segment at 451–600 (PSVVTPFSRD…PEIQNRLKET (150 aa)) is interaction with RAB38. The interaction with RAB32 stretch occupies residues 451 to 730 (PSVVTPFSRD…APAQKRLAKV (280 aa)). Residues 630-665 (APVQSLQRSVDSISQESSTSSFSSMSAGSRQEETKK) are disordered. Residues 638 to 658 (SVDSISQESSTSSFSSMSAGS) show a composition bias toward low complexity. The interval 658–707 (SRQEETKKDYREVEKLLRAVADGDLEMVRYLLEWTEEDLEDAEDTVSAVD) is required for interaction with VAMP7. 5 ANK repeats span residues 668 to 698 (REVE…DLED), 743 to 772 (DGSS…NAGA), 776 to 805 (DQAV…KPNK), 809 to 838 (SGNT…AINT), and 842 to 871 (KGNT…SVQV). Positions 692–746 (TEEDLEDAEDTVSAVDPEFCHPLCQCPKCAPAQKRLAKVPASGLGVNVTSQDGSS) are sufficient for interaction with VPS29. Phosphoserine is present on residues S962 and S970. The segment at 987-1050 (PAQSGSHAAE…TPQEVSASRS (64 aa)) is disordered. Positions 994-1007 (AAEKGNSDWPERPR) are enriched in basic and acidic residues. Residue T1023 is modified to Phosphothreonine. Polar residues predominate over residues 1040 to 1050 (STPQEVSASRS).

In terms of assembly, interacts with RAB21 (GDP-bound form), VPS29, KIF5A, KIF5C, GOLGA4. Interacts with RAB32 (GTP-bound form), RAB38 (GTP-bound form), VAMP7. Interacts with low affinity with RAB5. ANKRD27:RAB32 heterodimers can homodimerize to form tetramers. Can interact with RAB38 or RAB32, VPS29 and VAMP7 simultaneously. A decreased interaction with RAB32 seen in the presence of SGSM2.

The protein localises to the early endosome. It is found in the late endosome. The protein resides in the cytoplasmic vesicle membrane. It localises to the lysosome. Its subcellular location is the cell membrane. The protein localises to the melanosome. In terms of biological role, may be a guanine exchange factor (GEF) for Rab21, Rab32 and Rab38 and regulate endosome dynamics. May regulate the participation of VAMP7 in membrane fusion events; in vitro inhibits VAMP7-mediated SNARE complex formation by trapping VAMP7 in a closed, fusogenically inactive conformation. Involved in peripheral melanosomal distribution of TYRP1 in melanocytes; the function, which probably is implicating vesicle-trafficking, includes cooperation with Rab32, Rab38 and VAMP7. Involved in the regulation of neurite growth; the function seems to require its GEF activity, probably towards Rab21, and VAMP7 but not Rab32/38. Proposed to be involved in Golgi sorting of VAMP7 and transport of VAMP7 vesicles to the cell surface; the function seems to implicate kinesin heavy chain isoform 5 proteins, GOLGA4, RAB21 and MACF1. Required for the colocalization of VAMP7 and Rab21, probably on TGN sites. Involved in GLUT1 endosome-to-plasma membrane trafficking; the function is dependent of association with VPS29. Regulates the proper trafficking of melanogenic enzymes TYR, TYRP1 and DCT/TYRP2 to melanosomes in melanocytes. The sequence is that of Ankyrin repeat domain-containing protein 27 (ANKRD27) from Pongo abelii (Sumatran orangutan).